A 191-amino-acid chain; its full sequence is Adenylate cyclase CyaB (191 aa).

The CYTH domain maps to 9 to 180 (RFEVEFKYRL…TRSYRTLCEQ (172 aa)). Tyr46 serves as the catalytic Proton acceptor.

It belongs to the adenylyl cyclase CyaB family.

It localises to the cytoplasm. The enzyme catalyses ATP = 3',5'-cyclic AMP + diphosphate. Inhibited by GTP. Its function is as follows. In vitro, CyaB catalyzes the biosynthesis of cyclic AMP (cAMP) from ATP. It seems that under the physiological conditions CyaB has no function in cAMP processes. In vitro, it is also able to hydrolyze substrates such as thiamine triphosphate (ThTP) and inorganic triphosphate (PPPi) at a low rate. It has a slight preference for ThTP over ATP and PPPi in the presence of manganese ions. This PPPase activity is probably not of physiological importance. The protein is Adenylate cyclase CyaB (cyaB) of Aeromonas hydrophila.